We begin with the raw amino-acid sequence, 795 residues long: TBC1 domain family member 5 (795 aa).

Positions methionine 1–glutamine 13 are enriched in basic and acidic residues. A disordered region spans residues methionine 1–glutamate 49. The segment covering serine 25–glutamate 49 has biased composition (polar residues). The residue at position 42 (threonine 42) is a Phosphothreonine. Serine 43 and serine 44 each carry phosphoserine. Positions arginine 56–valine 64 are required for interaction with retromer; involved in interaction with ATG8 family proteins. The LIR 1 motif lies at lysine 57 to leucine 62. The Rab-GAP TBC domain occupies leucine 81 to glycine 359. Serine 460 bears the Phosphoserine mark. The interval proline 475–serine 564 is disordered. The span at glycine 484–proline 496 shows a compositional bias: low complexity. Residues serine 522, serine 539, serine 541, serine 544, serine 554, serine 570, serine 584, and serine 730 each carry the phosphoserine modification. Polar residues predominate over residues methionine 523–valine 542. The span at serine 554–serine 564 shows a compositional bias: polar residues. Positions histidine 674–isoleucine 795 are disordered. Residues alanine 727–serine 748 are compositionally biased toward polar residues. The segment covering proline 765–serine 776 has biased composition (low complexity). Positions serine 785–isoleucine 789 match the LIR 2 motif. Residues glycine 786–serine 791 form a required for interaction with ATG8 family proteins region. Position 791 is a phosphoserine (serine 791).

Interacts with MAP1LC3A, MAP1LC3B, MAP1LC3C, GABARAP, GABARAPL1, GABARAPL2. Interacts with VPS29 and VPS35; indicative for an association with retromer CSC subcomplex. MAP1LC3A and VPS29 compete for binding to TBC1D5. Interacts with AP2M1; indicative for an association with the AP2 complex. Interacts with ULK1 and ATG13 (phosphorylated); indicative for an association with the activated ULK1-ATG13-FIP200 complex. Interacts with ATG9A; the interactions seems to be restricted to the AP2-clathrin-associated fraction of ATG9A.

The protein resides in the endosome membrane. It localises to the cytoplasmic vesicle. It is found in the autophagosome. In terms of biological role, may act as a GTPase-activating protein (GAP) for Rab family protein(s). May act as a GAP for RAB7A. Can displace RAB7A and retromer CSC subcomplex from the endosomal membrane to the cytosol; at least retromer displacement seems to require its catalytic activity. Required for retrograde transport of cargo proteins from endosomes to the trans-Golgi network (TGN); the function seems to require its catalytic activity. Involved in regulation of autophagy. May act as a molecular switch between endosomal and autophagosomal transport and is involved in reprogramming vesicle trafficking upon autophagy induction. Involved in the trafficking of ATG9A upon activation of autophagy. May regulate the recruitment of ATG9A-AP2-containing vesicles to autophagic membranes. The protein is TBC1 domain family member 5 (TBC1D5) of Homo sapiens (Human).